The primary structure comprises 303 residues: UDP-N-acetylenolpyruvoylglucosamine reductase (303 aa).

In terms of domain architecture, FAD-binding PCMH-type spans 27 to 191 (VGGPAARLYK…ISAKLQLTPG (165 aa)). R171 is an active-site residue. S220 serves as the catalytic Proton donor. Residue E291 is part of the active site.

The protein belongs to the MurB family. It depends on FAD as a cofactor.

It localises to the cytoplasm. It carries out the reaction UDP-N-acetyl-alpha-D-muramate + NADP(+) = UDP-N-acetyl-3-O-(1-carboxyvinyl)-alpha-D-glucosamine + NADPH + H(+). It functions in the pathway cell wall biogenesis; peptidoglycan biosynthesis. Its function is as follows. Cell wall formation. This Legionella pneumophila (strain Paris) protein is UDP-N-acetylenolpyruvoylglucosamine reductase.